The sequence spans 677 residues: MTQVAKKILVTCALPYANGSIHLGHMLEHIQADVWVRYQRMRGHEVNFICADDAHGTPIMLKAQQLGITPEQMIAEMSKEHQTDFAGFNISYDNYHSTHSDENRVLSELIYTRLKENGFIKNRTISQLYDPEKGMFLPDRFVKGTCPKCKSPDQYGDNCEVCGATYSPTELIEPKSVVSGATPVMRDSEHFFFDLPSFSEMLQAWTRSGALQEQVANKMQEWFESGLQQWDISRDAPYFGFEIPNAPGKYFYVWLDAPIGYMGSFKNLCDKRGDTVSFDEYWKKDSDAELYHVIGKDIVYFHSLFWPAMLEGSGFRKPTNLFVHGYVTVNGAKMSKSRGTFIKASTWLNHFDADSLRYYYAAKLSSRIDDIDLNLEDFVQRVNADIVNKVVNLASRNAGFIAKRFDGELAAELADPALYQTFTDAAAVIGEAWESREFGKAIREIMALADLANRYVDEQAPWVVAKQEGRDADLQAICSMGINLFRVLMTYLKPVLPELCARAEAFLNVELTWDGVNAPLLGHKVNSFKALYNRIEMKQVEALVEASKEEVKAAAAPVTGELAENPIQETITFDDFAKIDLRVALIENAEFVDGSDKLLRLTLDLDGEKRNVFSGIRSAYPDPQALIGRLTVMVANLAPRKMRFGISEGMVMAAGPGGKDIFLLSPDSGAKPGQQVK.

The 'HIGH' region signature appears at 15 to 25; the sequence is PYANGSIHLGH. The Zn(2+) site is built by Cys-146, Cys-149, Cys-159, and Cys-162. The short motif at 333–337 is the 'KMSKS' region element; sequence KMSKS. Lys-336 is a binding site for ATP. One can recognise a tRNA-binding domain in the interval 575 to 677; that stretch reads DFAKIDLRVA…SGAKPGQQVK (103 aa).

Belongs to the class-I aminoacyl-tRNA synthetase family. MetG type 1 subfamily. As to quaternary structure, homodimer. Zn(2+) serves as cofactor.

It is found in the cytoplasm. The catalysed reaction is tRNA(Met) + L-methionine + ATP = L-methionyl-tRNA(Met) + AMP + diphosphate. Functionally, is required not only for elongation of protein synthesis but also for the initiation of all mRNA translation through initiator tRNA(fMet) aminoacylation. In Cronobacter sakazakii (strain ATCC BAA-894) (Enterobacter sakazakii), this protein is Methionine--tRNA ligase.